Consider the following 355-residue polypeptide: MSLFDTINAGGSQLLGFAWPTVWAIVRILVVSVVILLCVAYLILWERKLIGWMHVRLGPNRVGPGGLLQPIADVLKLLLKEVIQPSAASRWLYLIAPVMTVVPAFAVWAVIPFQAEAVLANVNAGLLYAMAISSIGVYAVILAGWASNSKYAFLGAMRAAAQMVSYEISMGFALVLVLMTAGSLNLSEIVGSQQHGFFAGHGVNFLSWNWLPLLPAFVVYFISGIAETNRHPFDVVEGESEIVAGHMIDYSGMAFALFFLAEYINMIVISALTATLFLGGWDAPFEFLSFIPGIFWLVLKIFALLSVFIWVRATFPRFRYDQIMRLGWKVFLPVTVVWVVVVGFWMMSPLNIWVK.

The next 8 membrane-spanning stretches (helical) occupy residues 25–45 (IVRILVVSVVILLCVAYLILW), 91–111 (WLYLIAPVMTVVPAFAVWAVI), 126–146 (LLYAMAISSIGVYAVILAGWA), 170–190 (MGFALVLVLMTAGSLNLSEIV), 205–225 (FLSWNWLPLLPAFVVYFISGI), 252–272 (GMAFALFFLAEYINMIVISAL), 290–310 (FIPGIFWLVLKIFALLSVFIW), and 330–350 (VFLPVTVVWVVVVGFWMMSPL).

This sequence belongs to the complex I subunit 1 family. As to quaternary structure, NDH-1 is composed of 14 different subunits. Subunits NuoA, H, J, K, L, M, N constitute the membrane sector of the complex.

It is found in the cell inner membrane. It catalyses the reaction a quinone + NADH + 5 H(+)(in) = a quinol + NAD(+) + 4 H(+)(out). In terms of biological role, NDH-1 shuttles electrons from NADH, via FMN and iron-sulfur (Fe-S) centers, to quinones in the respiratory chain. The immediate electron acceptor for the enzyme in this species is believed to be ubiquinone. Couples the redox reaction to proton translocation (for every two electrons transferred, four hydrogen ions are translocated across the cytoplasmic membrane), and thus conserves the redox energy in a proton gradient. This subunit may bind ubiquinone. The polypeptide is NADH-quinone oxidoreductase subunit H (Burkholderia lata (strain ATCC 17760 / DSM 23089 / LMG 22485 / NCIMB 9086 / R18194 / 383)).